We begin with the raw amino-acid sequence, 394 residues long: MRSLSIFGATGSIGESTFDLVMRKGGPEAFRTVALTGGRNIRRLAEMARALKAELAVTAHEDCLPALREALAGTGTEVAGGAQAIAEAADRPADWTMSAIVGAAGLVPGMRALKHGRTLALANKESLVTAGQLLMRTAQENGATILPVDSEHSAVFQALAGEDTACVERVIITASGGPFRDWSLERIRACTVAEAQAHPNWSMGQRISIDSASMFNKALELIETREFFGFEPDRIEAVVHPQSIVHAMVGFCDGGLMAHLGPADMRHAIGFALNWPGRGEVPVARIDLAQIASLTFQKPDEERFPALRLARDVMAARGLSGAAFNAAKEIALDHFIAGRIGFLDMAAVVEETLAGVSTDPLFGKVPDALEEVLAMDHLARRAAEEAAGLRQQKR.

Residues T10, G11, S12, I13, G38, R39, N40, and N123 each coordinate NADPH. Position 124 (K124) interacts with 1-deoxy-D-xylulose 5-phosphate. Position 125 (E125) interacts with NADPH. Position 149 (D149) interacts with Mn(2+). 1-deoxy-D-xylulose 5-phosphate-binding residues include S150, E151, S175, and H198. Position 151 (E151) interacts with Mn(2+). G204 is a binding site for NADPH. 1-deoxy-D-xylulose 5-phosphate-binding residues include S211, N216, K217, and E220. Mn(2+) is bound at residue E220.

It belongs to the DXR family. It depends on Mg(2+) as a cofactor. Mn(2+) serves as cofactor.

It catalyses the reaction 2-C-methyl-D-erythritol 4-phosphate + NADP(+) = 1-deoxy-D-xylulose 5-phosphate + NADPH + H(+). Its pathway is isoprenoid biosynthesis; isopentenyl diphosphate biosynthesis via DXP pathway; isopentenyl diphosphate from 1-deoxy-D-xylulose 5-phosphate: step 1/6. In terms of biological role, catalyzes the NADPH-dependent rearrangement and reduction of 1-deoxy-D-xylulose-5-phosphate (DXP) to 2-C-methyl-D-erythritol 4-phosphate (MEP). The chain is 1-deoxy-D-xylulose 5-phosphate reductoisomerase from Cereibacter sphaeroides (strain KD131 / KCTC 12085) (Rhodobacter sphaeroides).